A 366-amino-acid chain; its full sequence is Ribosomal RNA large subunit methyltransferase M (366 aa).

S-adenosyl-L-methionine contacts are provided by residues serine 188, 221 to 224 (CPGG), aspartate 240, aspartate 260, and aspartate 277. Residue lysine 306 is the Proton acceptor of the active site.

The protein belongs to the class I-like SAM-binding methyltransferase superfamily. RNA methyltransferase RlmE family. RlmM subfamily. In terms of assembly, monomer.

The protein resides in the cytoplasm. It carries out the reaction cytidine(2498) in 23S rRNA + S-adenosyl-L-methionine = 2'-O-methylcytidine(2498) in 23S rRNA + S-adenosyl-L-homocysteine + H(+). Catalyzes the 2'-O-methylation at nucleotide C2498 in 23S rRNA. In Klebsiella pneumoniae (strain 342), this protein is Ribosomal RNA large subunit methyltransferase M.